Reading from the N-terminus, the 1411-residue chain is DNA-directed RNA polymerase subunit beta' (1411 aa).

Residues C70, C72, C85, and C88 each contribute to the Zn(2+) site. D460, D462, and D464 together coordinate Mg(2+). C814, C889, C896, and C899 together coordinate Zn(2+). A compositionally biased stretch (polar residues) spans 1387-1399 (RSTSSGTEITSPS). The interval 1387–1411 (RSTSSGTEITSPSKDAIPLGSKVGF) is disordered.

This sequence belongs to the RNA polymerase beta' chain family. As to quaternary structure, the RNAP catalytic core consists of 2 alpha, 1 beta, 1 beta' and 1 omega subunit. When a sigma factor is associated with the core the holoenzyme is formed, which can initiate transcription. It depends on Mg(2+) as a cofactor. The cofactor is Zn(2+).

The enzyme catalyses RNA(n) + a ribonucleoside 5'-triphosphate = RNA(n+1) + diphosphate. In terms of biological role, DNA-dependent RNA polymerase catalyzes the transcription of DNA into RNA using the four ribonucleoside triphosphates as substrates. This chain is DNA-directed RNA polymerase subunit beta', found in Xylella fastidiosa (strain M12).